Reading from the N-terminus, the 64-residue chain is Putative antitoxin AF_1074 (64 aa).

It belongs to the UPF0165 family.

In terms of biological role, possibly the antitoxin component of a type II toxin-antitoxin (TA) system. The chain is Putative antitoxin AF_1074 from Archaeoglobus fulgidus (strain ATCC 49558 / DSM 4304 / JCM 9628 / NBRC 100126 / VC-16).